We begin with the raw amino-acid sequence, 388 residues long: MNLHEYQAKQLFAEFGLPVPEGYACDTPQEAFEAAGRITTEKKVVKCQVHAGGRGKAGGVELHDTKDGVKEFAQKWLGKNLVTYQTDANGQPVTKILVEEASNIANELYLGAVVDRATRKIVFMASTEGGVEIEKVAEETPELIHKAAIDPLVGPQAYQGRELAFKLGLEGDQIKQFVKIFMGLGTMFSQYDLALLEINPLVITGEGNLLCLDGKINIDSNALYRQPKLREMHDPSQEDEREAHAAQWELNYVALDGNVGCMVNGAGLAMGTMDIVNLHGGKPANFLDVGGGATKERVAEAFKIILSDDNVKAVLVNIFGGIVRCDMIAEGIIGAVKEVGVTVPVVVRLEGTNADLGREVLANSDVDIIAAESLTDAAQKVVAAAEAK.

Residues 9 to 244 (KQLFAEFGLP…PSQEDEREAH (236 aa)) enclose the ATP-grasp domain. ATP is bound by residues lysine 46, 53-55 (GRG), glutamate 99, serine 102, and glutamate 107. Residues asparagine 199 and aspartate 213 each coordinate Mg(2+). Residues asparagine 264 and 321–323 (GIV) contribute to the substrate site.

It belongs to the succinate/malate CoA ligase beta subunit family. In terms of assembly, heterotetramer of two alpha and two beta subunits. Mg(2+) is required as a cofactor.

The catalysed reaction is succinate + ATP + CoA = succinyl-CoA + ADP + phosphate. It catalyses the reaction GTP + succinate + CoA = succinyl-CoA + GDP + phosphate. It functions in the pathway carbohydrate metabolism; tricarboxylic acid cycle; succinate from succinyl-CoA (ligase route): step 1/1. Functionally, succinyl-CoA synthetase functions in the citric acid cycle (TCA), coupling the hydrolysis of succinyl-CoA to the synthesis of either ATP or GTP and thus represents the only step of substrate-level phosphorylation in the TCA. The beta subunit provides nucleotide specificity of the enzyme and binds the substrate succinate, while the binding sites for coenzyme A and phosphate are found in the alpha subunit. The chain is Succinate--CoA ligase [ADP-forming] subunit beta from Vibrio campbellii (strain ATCC BAA-1116).